A 209-amino-acid chain; its full sequence is Orotate phosphoribosyltransferase (209 aa).

Residues Arg-96, Lys-100, His-102, and 122–130 (EDLISTGGS) contribute to the 5-phospho-alpha-D-ribose 1-diphosphate site. Ser-126 is a binding site for orotate.

It belongs to the purine/pyrimidine phosphoribosyltransferase family. PyrE subfamily. In terms of assembly, homodimer. Mg(2+) serves as cofactor.

The catalysed reaction is orotidine 5'-phosphate + diphosphate = orotate + 5-phospho-alpha-D-ribose 1-diphosphate. The protein operates within pyrimidine metabolism; UMP biosynthesis via de novo pathway; UMP from orotate: step 1/2. Its function is as follows. Catalyzes the transfer of a ribosyl phosphate group from 5-phosphoribose 1-diphosphate to orotate, leading to the formation of orotidine monophosphate (OMP). The sequence is that of Orotate phosphoribosyltransferase from Cytophaga hutchinsonii (strain ATCC 33406 / DSM 1761 / CIP 103989 / NBRC 15051 / NCIMB 9469 / D465).